We begin with the raw amino-acid sequence, 553 residues long: Putative transport protein YidE (553 aa).

A run of 5 helical transmembrane segments spans residues 4–24 (IALT…IGNV), 28–48 (GVGL…HFVS), 65–85 (FGLI…FFAS), 95–115 (LFAV…HKLF), and 158–178 (MSYA…MWML). RCK C-terminal domains lie at 191-276 (QQHE…VIGQ) and 279-361 (DTSL…VLGN). 6 helical membrane passes run 371–391 (MLPV…PVFV), 393–413 (GFPA…ALIL), 439–459 (IVLF…HTLV), 464–484 (LSWI…VGIL), 493–513 (YLTM…LAFA), and 533–553 (LVMF…WSIG).

This sequence belongs to the AAE transporter (TC 2.A.81) family. YidE subfamily.

The protein resides in the cell membrane. This is Putative transport protein YidE from Escherichia coli O6:H1 (strain CFT073 / ATCC 700928 / UPEC).